We begin with the raw amino-acid sequence, 572 residues long: Urease subunit alpha (572 aa).

One can recognise a Urease domain in the interval 136 to 572 (GGIDTHIHWI…VPLAQRYFLF (437 aa)). Ni(2+) is bound by residues H141, H143, and K224. K224 is subject to N6-carboxylysine. Residue H226 participates in substrate binding. The Ni(2+) site is built by H253 and H279. Catalysis depends on H327, which acts as the Proton donor. D367 is a binding site for Ni(2+).

This sequence belongs to the metallo-dependent hydrolases superfamily. Urease alpha subunit family. In terms of assembly, heterotrimer of UreA (gamma), UreB (beta) and UreC (alpha) subunits. Three heterotrimers associate to form the active enzyme. Ni cation is required as a cofactor. Post-translationally, carboxylation allows a single lysine to coordinate two nickel ions.

The protein localises to the cytoplasm. The catalysed reaction is urea + 2 H2O + H(+) = hydrogencarbonate + 2 NH4(+). The protein operates within nitrogen metabolism; urea degradation; CO(2) and NH(3) from urea (urease route): step 1/1. This Actinobacillus pleuropneumoniae serotype 5b (strain L20) protein is Urease subunit alpha.